The following is a 934-amino-acid chain: Bifunctional uridylyltransferase/uridylyl-removing enzyme (934 aa).

Residues 1–379 (MSAHDLKLEE…TFSRRKRKLS (379 aa)) form a uridylyltransferase region. The uridylyl-removing stretch occupies residues 380–736 (DDGAFISENH…AKPHAFEAVT (357 aa)). Residues 496–613 (VDEHLLRCIA…IDFADTVQTM (118 aa)) form the HD domain. ACT domains follow at residues 737–818 (EITV…DMLA) and 848–931 (VIEV…RSPQ).

Belongs to the GlnD family. The cofactor is Mg(2+).

The catalysed reaction is [protein-PII]-L-tyrosine + UTP = [protein-PII]-uridylyl-L-tyrosine + diphosphate. It catalyses the reaction [protein-PII]-uridylyl-L-tyrosine + H2O = [protein-PII]-L-tyrosine + UMP + H(+). Uridylyltransferase (UTase) activity is inhibited by glutamine, while glutamine activates uridylyl-removing (UR) activity. Its function is as follows. Modifies, by uridylylation and deuridylylation, the PII regulatory proteins (GlnB and homologs), in response to the nitrogen status of the cell that GlnD senses through the glutamine level. Under low glutamine levels, catalyzes the conversion of the PII proteins and UTP to PII-UMP and PPi, while under higher glutamine levels, GlnD hydrolyzes PII-UMP to PII and UMP (deuridylylation). Thus, controls uridylylation state and activity of the PII proteins, and plays an important role in the regulation of nitrogen assimilation and metabolism. This Brucella suis (strain ATCC 23445 / NCTC 10510) protein is Bifunctional uridylyltransferase/uridylyl-removing enzyme.